The primary structure comprises 906 residues: Alanine--tRNA ligase (906 aa).

Zn(2+)-binding residues include H600, H604, C703, and H707.

This sequence belongs to the class-II aminoacyl-tRNA synthetase family. As to quaternary structure, homodimer. Zn(2+) serves as cofactor.

The protein resides in the cytoplasm. It carries out the reaction tRNA(Ala) + L-alanine + ATP = L-alanyl-tRNA(Ala) + AMP + diphosphate. Catalyzes the attachment of alanine to tRNA(Ala) in a two-step reaction: alanine is first activated by ATP to form Ala-AMP and then transferred to the acceptor end of tRNA(Ala). Incorrectly charged aminoacyl-tRNA(Ala) is also edited in situ by the editing domain. The sequence is that of Alanine--tRNA ligase (alaS) from Archaeoglobus fulgidus (strain ATCC 49558 / DSM 4304 / JCM 9628 / NBRC 100126 / VC-16).